The sequence spans 323 residues: SPbeta prophage-derived uncharacterized protein YorG (323 aa).

Residues 222–272 (TAENLEKAIIEAVERQEQAEGIVAVTYEEQKQNNASEELDFNSLMDQIKEI) adopt a coiled-coil conformation.

The chain is SPbeta prophage-derived uncharacterized protein YorG (yorG) from Bacillus subtilis (strain 168).